We begin with the raw amino-acid sequence, 162 residues long: Sorting nexin-12 (162 aa).

The tract at residues 1–20 (MSDTAVADTRRLNSKPQDLT) is disordered. Ser2 is subject to N-acetylserine. Tyr23 carries the phosphotyrosine modification. Residues 28-152 (NFLEIDIFNP…HMFLQEEAID (125 aa)) form the PX domain. A 1,2-diacyl-sn-glycero-3-phospho-(1D-myo-inositol-3-phosphate) contacts are provided by Arg71, Ser73, Lys96, and Arg119. Residue Ser73 is modified to Phosphoserine.

Belongs to the sorting nexin family.

Its subcellular location is the membrane. Functionally, may be involved in several stages of intracellular trafficking. This chain is Sorting nexin-12 (SNX12), found in Homo sapiens (Human).